We begin with the raw amino-acid sequence, 123 residues long: Large ribosomal subunit protein uL14 (123 aa).

It belongs to the universal ribosomal protein uL14 family. Part of the 50S ribosomal subunit. Forms a cluster with proteins L3 and L19. In the 70S ribosome, L14 and L19 interact and together make contacts with the 16S rRNA in bridges B5 and B8.

Functionally, binds to 23S rRNA. Forms part of two intersubunit bridges in the 70S ribosome. The chain is Large ribosomal subunit protein uL14 from Enterobacter sp. (strain 638).